The chain runs to 200 residues: Phospholipase A2 inhibitor 1 (200 aa).

The first 19 residues, 1 to 19 (MKSLHIICLLFIFVARGNS), serve as a signal peptide directing secretion. 8 disulfides stabilise this stretch: Cys-22–Cys-46, Cys-25–Cys-32, Cys-39–Cys-67, Cys-73–Cys-94, Cys-95–Cys-100, Cys-118–Cys-143, Cys-136–Cys-165, and Cys-169–Cys-191. Asn-176 carries N-linked (GlcNAc...) asparagine glycosylation.

Belongs to the CNF-like-inhibitor family. Occurs as a mixture of oligomers. Tetrameric arrangement appears to be the predominant quaternary structure. Post-translationally, N-glycosylated. In terms of tissue distribution, expressed by the liver.

It localises to the secreted. Its function is as follows. Inhibits basic phospholipase A2 isozymes PLA-B, BP-I and BP-II. The protein is Phospholipase A2 inhibitor 1 of Protobothrops flavoviridis (Habu).